The primary structure comprises 190 residues: MGIMGTFLLLAAEANAVHSELAEGAAEGGFGLNLDIFETNLINLAILVGILFYFGRKVLSNILNERQSNIATAIQEAEGRLKEAKTALSQAQEQLKQSQAEAERIRQSAVENAQKAKEALLAKAVQDVERLKQTAAADLNTETERAIAQLRQRVATLALQKVESQLKGGIADDAQQSLIDRSIAQLGGNV.

A helical membrane pass occupies residues Leu34–Phe54.

This sequence belongs to the ATPase B chain family. In terms of assembly, F-type ATPases have 2 components, F(1) - the catalytic core - and F(0) - the membrane proton channel. F(1) has five subunits: alpha(3), beta(3), gamma(1), delta(1), epsilon(1). F(0) has four main subunits: a(1), b(1), b'(1) and c(10-14). The alpha and beta chains form an alternating ring which encloses part of the gamma chain. F(1) is attached to F(0) by a central stalk formed by the gamma and epsilon chains, while a peripheral stalk is formed by the delta, b and b' chains.

Its subcellular location is the cellular thylakoid membrane. Its function is as follows. F(1)F(0) ATP synthase produces ATP from ADP in the presence of a proton or sodium gradient. F-type ATPases consist of two structural domains, F(1) containing the extramembraneous catalytic core and F(0) containing the membrane proton channel, linked together by a central stalk and a peripheral stalk. During catalysis, ATP synthesis in the catalytic domain of F(1) is coupled via a rotary mechanism of the central stalk subunits to proton translocation. Component of the F(0) channel, it forms part of the peripheral stalk, linking F(1) to F(0). This is ATP synthase subunit b from Nostoc punctiforme (strain ATCC 29133 / PCC 73102).